We begin with the raw amino-acid sequence, 555 residues long: Esterase-5A (555 aa).

Residues 1–19 (MHLVRWLICLIQLWIQLGA) form the signal peptide. An intrachain disulfide couples Cys-87 to Cys-106. N-linked (GlcNAc...) asparagine glycans are attached at residues Asn-95 and Asn-116. Residue Ser-210 is the Acyl-ester intermediate of the active site. A disulfide bridge links Cys-262 with Cys-274. N-linked (GlcNAc...) asparagine glycans are attached at residues Asn-479 and Asn-510. Residues Cys-518 and Cys-539 are joined by a disulfide bond.

The protein belongs to the type-B carboxylesterase/lipase family.

The protein localises to the secreted. It catalyses the reaction a carboxylic ester + H2O = an alcohol + a carboxylate + H(+). The protein is Esterase-5A (Est-5A) of Drosophila miranda (Fruit fly).